The sequence spans 358 residues: Cytoplasmic dynein 2 light intermediate chain 1 (358 aa).

2 disordered regions span residues 1 to 35 and 307 to 358; these read MPKV…EDAH and ESTR…ALDP. Residues 24 to 33 show a composition bias toward acidic residues; that stretch reads TDEEEAEEED. 2 stretches are compositionally biased toward basic and acidic residues: residues 307–320 and 333–349; these read ESTR…DPVK and RAQK…EQAK.

The protein belongs to the dynein light intermediate chain family. As to quaternary structure, light intermediate chain of the cytoplasmic dynein complex 2, a multisubunit complex composed at least of eleven different proteins. The cytoplasmic dynein 2 complex consists of two catalytic heavy chains (HCs) and a number of non-catalytic subunits presented by intermediate chains (ICs), light intermediate chains (LICs) and light chains (LCs). Among them, a heavy chain (DYNC2H1), two intermediate chains (DYNC2I2 and DYNC2I1), a light intermediate chain (DYNC2LI1), and a light chain (DYNLT2B) are unique to the dynein-2 complex, but a subset of light chains are also shared by dynein-1 and dynein-2 complexes. Dynein-2 complex is built around two copies of cytoplasmic dynein 2 heavy chain 1 (DYNC2H1). The C-terminal region forms the motor domain, which converts the energy from ATP hydrolysis into movement. Its N-terminal region forms the tail, an extended structure that binds the other subunits and holds the two heavy chains in a homodimer.

It is found in the cytoplasm. The protein localises to the cell projection. It localises to the cilium. Its subcellular location is the cytoskeleton. The protein resides in the cilium basal body. It is found in the cilium axoneme. The protein localises to the microtubule organizing center. It localises to the centrosome. Acts as one of several non-catalytic accessory components of the cytoplasmic dynein 2 complex (dynein-2 complex), a motor protein complex that drives the movement of cargos along microtubules within cilia and flagella in concert with the intraflagellar transport (IFT) system, facilitating the assembly of these organelles. This chain is Cytoplasmic dynein 2 light intermediate chain 1 (dync2li1), found in Danio rerio (Zebrafish).